The chain runs to 183 residues: Nucleoside triphosphate pyrophosphatase (183 aa).

Asp71 serves as the catalytic Proton acceptor.

The protein belongs to the Maf family. Requires a divalent metal cation as cofactor.

Its subcellular location is the cytoplasm. It carries out the reaction a ribonucleoside 5'-triphosphate + H2O = a ribonucleoside 5'-phosphate + diphosphate + H(+). The catalysed reaction is a 2'-deoxyribonucleoside 5'-triphosphate + H2O = a 2'-deoxyribonucleoside 5'-phosphate + diphosphate + H(+). In terms of biological role, nucleoside triphosphate pyrophosphatase. May have a dual role in cell division arrest and in preventing the incorporation of modified nucleotides into cellular nucleic acids. This is Nucleoside triphosphate pyrophosphatase from Campylobacter jejuni subsp. jejuni serotype O:2 (strain ATCC 700819 / NCTC 11168).